Here is a 370-residue protein sequence, read N- to C-terminus: Lysophosphatidic acid receptor 4 (370 aa).

At 1–43 (MGDRRFIDFQFQDSNSSLRPRLGNATANNTCIVDDSFKYNLNG) the chain is on the extracellular side. 3 N-linked (GlcNAc...) asparagine glycosylation sites follow: asparagine 15, asparagine 24, and asparagine 28. Residues 44–64 (AVYSVVFILGLITNSVSLFVF) form a helical membrane-spanning segment. The Cytoplasmic portion of the chain corresponds to 65-73 (CFRMKMRSE). A helical transmembrane segment spans residues 74 to 94 (TAIFITNLAVSDLLFVCTLPF). Residues 95–112 (KIFYNFNRHWPFGDTLCK) lie on the Extracellular side of the membrane. Cysteines 111 and 188 form a disulfide. Residues 113–133 (ISGTAFLTNIYGSMLFLTCIS) traverse the membrane as a helical segment. The Cytoplasmic segment spans residues 134–155 (VDRFLAIVYPFRSRTIRTRRNS). A helical membrane pass occupies residues 156–176 (AIVCAGVWILVLSGGISASLF). Over 177-203 (STTNVNNATTTCFEGFSKRVWKTYLSK) the chain is Extracellular. N-linked (GlcNAc...) asparagine glycosylation is present at asparagine 183. Residues 204 to 224 (ITIFIEVVGFIIPLILNVSCS) traverse the membrane as a helical segment. At 225–254 (SVVLRTLRKPATLSQIGTNKKKVLKMITVH) the chain is on the cytoplasmic side. Residues 255 to 275 (MAVFVVCFVPYNSVLFLYALV) form a helical membrane-spanning segment. Topologically, residues 276 to 294 (RSQAITNCFLERFAKIMYP) are extracellular. A helical transmembrane segment spans residues 295-315 (ITLCLATLNCCFDPFIYYFTL). Over 316–370 (ESFQKSFYINAHIRMESLFKTETPLTTKPSLPAIQEEVSDQTTNNGGELMLESTF) the chain is Cytoplasmic.

This sequence belongs to the G-protein coupled receptor 1 family. As to expression, high expression in ovary. Not detected in the brain regions thalamus, putamen, caudate, frontal cortex, pons, hypothalamus and hippocampus.

The protein resides in the cell membrane. Receptor for lysophosphatidic acid (LPA), a mediator of diverse cellular activities. Transduces a signal by increasing the intracellular calcium ions and by stimulating adenylyl cyclase activity. The rank order of potency for agonists of this receptor is 1-oleoyl- &gt; 1-stearoyl- &gt; 1-palmitoyl- &gt; 1-myristoyl- &gt; 1-alkyl- &gt; 1-alkenyl-LPA. The sequence is that of Lysophosphatidic acid receptor 4 (LPAR4) from Homo sapiens (Human).